A 138-amino-acid chain; its full sequence is uncharacterized protein (138 aa).

Positions 1–35 (MVAPAARVFLRAVRAALTSTVPDLLCLLARGSPRG) are cleaved as a signal peptide.

Isoform 1 is highly expressed in small intestine, testis and kidney, medium expressed in brain and heart and low expressed in colon; it could not be detected in liver, adrenal gland and pancreas.

The protein localises to the secreted. This is an uncharacterized protein from Homo sapiens (Human).